We begin with the raw amino-acid sequence, 251 residues long: 4-hydroxy-tetrahydrodipicolinate reductase (251 aa).

NAD(+) is bound by residues 9–14 (GCNGKM), 85–87 (ATT), and 109–112 (SANM). His141 (proton donor/acceptor) is an active-site residue. Residue His142 coordinates (S)-2,3,4,5-tetrahydrodipicolinate. Residue Lys145 is the Proton donor of the active site. Residue 151-152 (GT) coordinates (S)-2,3,4,5-tetrahydrodipicolinate.

This sequence belongs to the DapB family.

It is found in the cytoplasm. The catalysed reaction is (S)-2,3,4,5-tetrahydrodipicolinate + NAD(+) + H2O = (2S,4S)-4-hydroxy-2,3,4,5-tetrahydrodipicolinate + NADH + H(+). It catalyses the reaction (S)-2,3,4,5-tetrahydrodipicolinate + NADP(+) + H2O = (2S,4S)-4-hydroxy-2,3,4,5-tetrahydrodipicolinate + NADPH + H(+). Its pathway is amino-acid biosynthesis; L-lysine biosynthesis via DAP pathway; (S)-tetrahydrodipicolinate from L-aspartate: step 4/4. Catalyzes the conversion of 4-hydroxy-tetrahydrodipicolinate (HTPA) to tetrahydrodipicolinate. In Caldanaerobacter subterraneus subsp. tengcongensis (strain DSM 15242 / JCM 11007 / NBRC 100824 / MB4) (Thermoanaerobacter tengcongensis), this protein is 4-hydroxy-tetrahydrodipicolinate reductase.